The primary structure comprises 369 residues: Putative 2-aminoethylphosphonate import ATP-binding protein PhnT (369 aa).

The 232-residue stretch at 19-250 folds into the ABC transporter domain; that stretch reads IVLDSLRVAY…PPNRFAAEFL (232 aa). An ATP-binding site is contributed by 51 to 58; the sequence is GPSGSGKT.

Belongs to the ABC transporter superfamily. 2-aminoethylphosphonate importer (TC 3.A.1.11.5) family.

The protein localises to the cell inner membrane. Functionally, probably part of the PhnSTUV complex (TC 3.A.1.11.5) involved in 2-aminoethylphosphonate import. Probably responsible for energy coupling to the transport system. This Salmonella paratyphi A (strain ATCC 9150 / SARB42) protein is Putative 2-aminoethylphosphonate import ATP-binding protein PhnT (phnT).